Reading from the N-terminus, the 155-residue chain is Small ribosomal subunit protein uS7c (155 aa).

It belongs to the universal ribosomal protein uS7 family. As to quaternary structure, part of the 30S ribosomal subunit.

The protein localises to the plastid. It localises to the chloroplast. Its function is as follows. One of the primary rRNA binding proteins, it binds directly to 16S rRNA where it nucleates assembly of the head domain of the 30S subunit. The protein is Small ribosomal subunit protein uS7c (rps7) of Chaetosphaeridium globosum (Charophycean green alga).